Here is a 219-residue protein sequence, read N- to C-terminus: 7-cyano-7-deazaguanine synthase (219 aa).

10–20 (FSGGQDSTTCL) contributes to the ATP binding site. Cysteine 188, cysteine 197, cysteine 200, and cysteine 203 together coordinate Zn(2+).

It belongs to the QueC family. As to quaternary structure, homodimer. The cofactor is Zn(2+).

The enzyme catalyses 7-carboxy-7-deazaguanine + NH4(+) + ATP = 7-cyano-7-deazaguanine + ADP + phosphate + H2O + H(+). It participates in purine metabolism; 7-cyano-7-deazaguanine biosynthesis. Functionally, catalyzes the ATP-dependent conversion of 7-carboxy-7-deazaguanine (CDG) to 7-cyano-7-deazaguanine (preQ(0)). This is 7-cyano-7-deazaguanine synthase from Clostridium botulinum (strain Langeland / NCTC 10281 / Type F).